The primary structure comprises 774 residues: Probable E3 ubiquitin-protein ligase HECTD2 (774 aa).

Residues 1–51 (MSEAARDLSPGAPPAVAAAAPEERKGKEPEREKLPPIVTAGAAAGLDRGSK) are disordered. Ser-9 carries the phosphoserine modification. The segment covering 21-34 (PEERKGKEPEREKL) has biased composition (basic and acidic residues). The HECT domain occupies 435 to 774 (KRADLKKKLK…ISNSEGFGLE (340 aa)). Cys-742 serves as the catalytic Glycyl thioester intermediate.

It carries out the reaction S-ubiquitinyl-[E2 ubiquitin-conjugating enzyme]-L-cysteine + [acceptor protein]-L-lysine = [E2 ubiquitin-conjugating enzyme]-L-cysteine + N(6)-ubiquitinyl-[acceptor protein]-L-lysine.. It participates in protein modification; protein ubiquitination. Functionally, E3 ubiquitin-protein ligase which accepts ubiquitin from an E2 ubiquitin-conjugating enzyme in the form of a thioester and then directly transfers the ubiquitin to targeted substrates. In Mus musculus (Mouse), this protein is Probable E3 ubiquitin-protein ligase HECTD2 (Hectd2).